A 604-amino-acid polypeptide reads, in one-letter code: MKPTTPTPMKNIRNFSIIAHIDHGKSTLADCLIAECNAISNREMTSQVMDTMDIEKERGITIKAQSVRLNYTLKGEDYVLNLIDTPGHVDFSYEVSRSLCSCEGALLVVDATQGVEAQTIANTYIALDNHLEILPVINKIDLPNANVLEVKQDIEDTIGIDCSSVNEVSAKAKIGIKDLLEKIITTIPAPSGDASAPLKALIYDSWFDNYLGALALVRIMDGNINTEQEILVMGTGKKHGVLGLYYPNPLKKIPTKSLECGEIGIVSLGLKSVTDIAVGDTLTDAKNPTSKPIEGFMPAKPFVFAGIYPIETDRFEDLREALLKLQLNDCALNFEPESSVALGFGFRVGFLGLLHMEVIKERLEREFSLNLIATAPTVVYEVHLTDNSIKYVQNPSELPPENHIACIKEPFVRATIITPSEFLGNLMQLLNNKRGIQEKMEYLNQSRVMLTYSLPSNEIVMDFYDKLKSCTKGYASFDYEPIENREANLVKLDVRVAGDIVDALSIIIDKNKAYEKGRALVEAMKELIPHQLFEVAIQASVGNKIIARETIKSVGKNVTAKCYGGDITRKRKLLEKQKEGKKRMKAIGKVELPQDVFLAILKID.

One can recognise a tr-type G domain in the interval 10–191; it reads KNIRNFSIIA…KIITTIPAPS (182 aa). Residues 22 to 27 and 138 to 141 contribute to the GTP site; these read DHGKST and NKID.

The protein belongs to the TRAFAC class translation factor GTPase superfamily. Classic translation factor GTPase family. LepA subfamily.

It localises to the cell inner membrane. The enzyme catalyses GTP + H2O = GDP + phosphate + H(+). Functionally, required for accurate and efficient protein synthesis under certain stress conditions. May act as a fidelity factor of the translation reaction, by catalyzing a one-codon backward translocation of tRNAs on improperly translocated ribosomes. Back-translocation proceeds from a post-translocation (POST) complex to a pre-translocation (PRE) complex, thus giving elongation factor G a second chance to translocate the tRNAs correctly. Binds to ribosomes in a GTP-dependent manner. In Helicobacter acinonychis (strain Sheeba), this protein is Elongation factor 4.